The following is a 204-amino-acid chain: Oocyte-specific homeobox protein 1 (204 aa).

The interval 28–73 is disordered; that stretch reads EPARNLAFQMRQSPLVTPGSTTKSSLSVPERNLLKQESQGPSRQSG. Composition is skewed to polar residues over residues 37 to 54 and 62 to 72; these read MRQSPLVTPGSTTKSSLS and KQESQGPSRQS. Residues 94-153 constitute a DNA-binding region (homeobox); the sequence is FRKERTVYTKEQQGLLQKHFDECQYPNKKKIVELALSVGVTKREIKIWFKNNRAKYRRMN.

Belongs to the paired homeobox family. Obox subfamily. Specifically expressed in oocytes and early embryos.

Its subcellular location is the nucleus. Functionally, transcription factor required for zygotic genome activation (ZGA), a critical event in early embryonic development during which the developmental control passes from maternally provided mRNAs to the expression of the zygotic genome after fertilization. Together with other Obox family members, required in early two-cell stage embryos to kick-start the major ZGA wave by facilitating RNA Polymerase II 'pre-configuration', during which RNA Polymerase II relocates from the initial one-cell stage binding targets to ZGA gene promoters and distal enhancers. Mechanistically, promotes recruitment of RNA Polymerase II from (CG-rich) non-ZGA genes to (CG-poor) ZGA genes at the two-cell stage. Binds to regulatory DNA sequences containing a 5'-ACNCCTTTAATCCCAG-3' sequence motif. Most maternal and zygotic Obox family proteins can compensate for one another. In addition to its role in ZGA, promotes embryonic stem cell pluripotency. This chain is Oocyte-specific homeobox protein 1, found in Mus musculus (Mouse).